The chain runs to 583 residues: Isocitrate dehydrogenase kinase/phosphatase (583 aa).

ATP contacts are provided by residues 315–321 (APGIRGM) and K336. D371 is a catalytic residue.

This sequence belongs to the AceK family.

It localises to the cytoplasm. It catalyses the reaction L-seryl-[isocitrate dehydrogenase] + ATP = O-phospho-L-seryl-[isocitrate dehydrogenase] + ADP + H(+). Its function is as follows. Bifunctional enzyme which can phosphorylate or dephosphorylate isocitrate dehydrogenase (IDH) on a specific serine residue. This is a regulatory mechanism which enables bacteria to bypass the Krebs cycle via the glyoxylate shunt in response to the source of carbon. When bacteria are grown on glucose, IDH is fully active and unphosphorylated, but when grown on acetate or ethanol, the activity of IDH declines drastically concomitant with its phosphorylation. The polypeptide is Isocitrate dehydrogenase kinase/phosphatase (Salmonella gallinarum (strain 287/91 / NCTC 13346)).